The sequence spans 338 residues: Erlin-2 (338 aa).

Residues 1–3 are Cytoplasmic-facing; sequence MAQ. A helical transmembrane segment spans residues 4-24; that stretch reads LGAVVAVAASFFCASLFSAVH. Topologically, residues 25–338 are lumenal; the sequence is KIEEGHIGVY…DEPMEADSEN (314 aa). Asn-106 carries N-linked (GlcNAc...) asparagine glycosylation. The tract at residues 177-309 is interaction with ERLIN1; that stretch reads EAIRRNYELM…DIPNMFMDSA (133 aa). Lys-267 is subject to N6-acetyllysine.

The protein belongs to the band 7/mec-2 family. As to quaternary structure, forms a heteromeric complex with ERLIN1. In complex with ERLIN1, interacts with RNF170. Interacts with activated ITPR1, independently of the degree of ITPR1 polyubiquitination. Interacts with SCAP, INSIG1, SREBF1 and SREBF2 under cholesterol sufficiency conditions; indicative for an association with the SCAP-SREBP-INSIG complex. Probably part of an AMFR/gp78 and INSIG1-containing ubiquitin ligase complex involved in ERAD of HMGCR. Interacts with TMUB1; TMUB1 bridges the association with AMFR. Interacts with SYVN1 and RNF139. Interacts with TMEM259. Interacts with TMEM41B. Deubiquitinated by USP25; leading to stabilization.

Its subcellular location is the endoplasmic reticulum membrane. Functionally, component of the ERLIN1/ERLIN2 complex which mediates the endoplasmic reticulum-associated degradation (ERAD) of inositol 1,4,5-trisphosphate receptors (IP3Rs) such as ITPR1. Promotes sterol-accelerated ERAD of HMGCR probably implicating an AMFR/gp78-containing ubiquitin ligase complex. Involved in regulation of cellular cholesterol homeostasis by regulation the SREBP signaling pathway. May promote ER retention of the SCAP-SREBF complex. This Bos taurus (Bovine) protein is Erlin-2 (ERLIN2).